The following is a 510-amino-acid chain: Glycerol kinase (510 aa).

Threonine 13 serves as a coordination point for ADP. Positions 13 and 14 each coordinate ATP. Position 13 (threonine 13) interacts with sn-glycerol 3-phosphate. Arginine 17 contacts ADP. Sn-glycerol 3-phosphate-binding residues include arginine 83, glutamate 84, tyrosine 135, and aspartate 255. The glycerol site is built by arginine 83, glutamate 84, tyrosine 135, aspartate 255, and glutamine 256. 4 residues coordinate ADP: threonine 277, glycine 321, glycine 421, and asparagine 425. ATP contacts are provided by threonine 277, glycine 321, and glycine 421.

The protein belongs to the FGGY kinase family.

The catalysed reaction is glycerol + ATP = sn-glycerol 3-phosphate + ADP + H(+). Its pathway is polyol metabolism; glycerol degradation via glycerol kinase pathway; sn-glycerol 3-phosphate from glycerol: step 1/1. In terms of biological role, key enzyme in the regulation of glycerol uptake and metabolism. Catalyzes the phosphorylation of glycerol to yield sn-glycerol 3-phosphate. The protein is Glycerol kinase of Halobacterium salinarum (strain ATCC 29341 / DSM 671 / R1).